The following is a 306-amino-acid chain: D-alanine--D-alanine ligase (306 aa).

Residues R101 to E300 enclose the ATP-grasp domain. M128 to T182 contributes to the ATP binding site. Residues D250, E267, and N269 each contribute to the Mg(2+) site.

It belongs to the D-alanine--D-alanine ligase family. The cofactor is Mg(2+). It depends on Mn(2+) as a cofactor.

It is found in the cytoplasm. The enzyme catalyses 2 D-alanine + ATP = D-alanyl-D-alanine + ADP + phosphate + H(+). It functions in the pathway cell wall biogenesis; peptidoglycan biosynthesis. Cell wall formation. This Xanthobacter autotrophicus (strain ATCC BAA-1158 / Py2) protein is D-alanine--D-alanine ligase.